A 91-amino-acid polypeptide reads, in one-letter code: Elongation factor 1-beta (91 aa).

It belongs to the EF-1-beta/EF-1-delta family.

Functionally, promotes the exchange of GDP for GTP in EF-1-alpha/GDP, thus allowing the regeneration of EF-1-alpha/GTP that could then be used to form the ternary complex EF-1-alpha/GTP/AAtRNA. In Saccharolobus islandicus (strain Y.N.15.51 / Yellowstone #2) (Sulfolobus islandicus), this protein is Elongation factor 1-beta.